Reading from the N-terminus, the 686-residue chain is Protein MxiA (686 aa).

6 consecutive transmembrane segments (helical) span residues 28–52 (LIIPLPTYLVDFLIGLNIVLAILVF), 105–129 (FVIGDSLAVGFVIFSIVTVVQFIVI), 197–216 (AIAGIIIIFVNLIGGISVGM), 232–256 (ILTIGDGLVSQIPALLISISAGFIV), 274–292 (IFGNPFVLIVTSALALAIG), and 299–315 (FFVFFLIAVTLTALFYY).

This sequence belongs to the FHIPEP (flagella/HR/invasion proteins export pore) family.

It is found in the cell inner membrane. Its function is as follows. Necessary for the secretion of IPA invasins. This Shigella flexneri protein is Protein MxiA (mxiA).